A 319-amino-acid polypeptide reads, in one-letter code: 1-aminocyclopropane-1-carboxylate oxidase (319 aa).

Residues 153 to 253 (PTFGTKVSNY…RMSIASFYNP (101 aa)) form the Fe2OG dioxygenase domain. Fe cation-binding residues include His-177, Asp-179, and His-234.

It belongs to the iron/ascorbate-dependent oxidoreductase family. The cofactor is Fe cation.

It catalyses the reaction 1-aminocyclopropane-1-carboxylate + L-ascorbate + O2 = ethene + L-dehydroascorbate + hydrogen cyanide + CO2 + 2 H2O. It functions in the pathway alkene biosynthesis; ethylene biosynthesis via S-adenosyl-L-methionine; ethylene from S-adenosyl-L-methionine: step 2/2. In Prunus mume (Japanese apricot), this protein is 1-aminocyclopropane-1-carboxylate oxidase (ACO1).